The following is a 153-amino-acid chain: uncharacterized protein (153 aa).

It belongs to the RusA family.

This is an uncharacterized protein from Xylella fastidiosa (strain Temecula1 / ATCC 700964).